The sequence spans 163 residues: Biotin carboxyl carrier protein of acetyl-CoA carboxylase (163 aa).

In terms of domain architecture, Biotinyl-binding spans 85–161; it reads GDFIVSPLVG…QFGSKLFRIV (77 aa). Residue K127 is modified to N6-biotinyllysine.

Homodimer.

The protein operates within lipid metabolism; fatty acid biosynthesis. In terms of biological role, this protein is a component of the acetyl coenzyme A carboxylase complex; first, biotin carboxylase catalyzes the carboxylation of the carrier protein and then the transcarboxylase transfers the carboxyl group to form malonyl-CoA. This chain is Biotin carboxyl carrier protein of acetyl-CoA carboxylase (accB), found in Chlamydia muridarum (strain MoPn / Nigg).